The sequence spans 605 residues: Protein kinase wis1 (605 aa).

Polar residues predominate over residues 1-20 (MSSPNNQPLSCSLRQLSISP). Residues 1-141 (MSSPNNQPLS…TPPGPFPGGL (141 aa)) form a disordered region. 2 stretches are compositionally biased toward low complexity: residues 31 to 73 (GSLL…SSPS) and 90 to 105 (RLGR…SLNL). Residues 106 to 115 (DMKDPSEKPR) show a composition bias toward basic and acidic residues. Residue Ser168 is modified to Phosphoserine. Positions 188–200 (SQLAGRLSNSPVK) are enriched in polar residues. The segment at 188–263 (SQLAGRLSNS…PSSMASRRGL (76 aa)) is disordered. A compositionally biased stretch (low complexity) spans 244 to 256 (SNSNPTSPVSPSS). A Phosphoserine modification is found at Ser253. Positions 320–579 (IIKLEELGKG…YHELANHPWL (260 aa)) constitute a Protein kinase domain. Residues 326–334 (LGKGNYGVV) and Lys349 contribute to the ATP site. The Proton acceptor role is filled by Asp441. Ser469 bears the Phosphoserine mark. At Thr473 the chain carries Phosphothreonine.

The protein belongs to the protein kinase superfamily. STE Ser/Thr protein kinase family. MAP kinase kinase subfamily. Dephosphorylated by pyp1 and pyp2.

It catalyses the reaction L-seryl-[protein] + ATP = O-phospho-L-seryl-[protein] + ADP + H(+). The catalysed reaction is L-threonyl-[protein] + ATP = O-phospho-L-threonyl-[protein] + ADP + H(+). The enzyme catalyses L-tyrosyl-[protein] + ATP = O-phospho-L-tyrosyl-[protein] + ADP + H(+). Dosage-dependent regulator of mitosis with serine/ threonine protein kinase activity. May play a role in the integration of nutritional sensing with the control over entry into mitosis. It may interact with cdc25, wee1 and win1. May activate sty1. The chain is Protein kinase wis1 (wis1) from Schizosaccharomyces pombe (strain 972 / ATCC 24843) (Fission yeast).